A 277-amino-acid polypeptide reads, in one-letter code: S-formylglutathione hydrolase FrmB (277 aa).

Catalysis depends on charge relay system residues S145, D221, and H254.

This sequence belongs to the esterase D family.

It carries out the reaction S-formylglutathione + H2O = formate + glutathione + H(+). In terms of biological role, serine hydrolase involved in the detoxification of formaldehyde. Hydrolyzes S-formylglutathione to glutathione and formate. This is S-formylglutathione hydrolase FrmB (frmB) from Escherichia coli O1:K1 / APEC.